Reading from the N-terminus, the 178-residue chain is Negative modulator of initiation of replication (178 aa).

The interval 113–117 (RTRVY) is interaction with DNA.

This sequence belongs to the SeqA family. Homodimer. Polymerizes to form helical filaments.

It localises to the cytoplasm. Negative regulator of replication initiation, which contributes to regulation of DNA replication and ensures that replication initiation occurs exactly once per chromosome per cell cycle. Binds to pairs of hemimethylated GATC sequences in the oriC region, thus preventing assembly of replication proteins and re-initiation at newly replicated origins. Repression is relieved when the region becomes fully methylated. This Photobacterium profundum (strain SS9) protein is Negative modulator of initiation of replication.